A 341-amino-acid chain; its full sequence is Holliday junction branch migration complex subunit RuvB (341 aa).

Positions 1–182 (MTERFVTPDF…FGVICRLEFY (182 aa)) are large ATPase domain (RuvB-L). ATP contacts are provided by residues Leu-21, Arg-22, Gly-63, Lys-66, Thr-67, Thr-68, 129 to 131 (EDY), Arg-172, Tyr-182, and Arg-219. Thr-67 serves as a coordination point for Mg(2+). Residues 183 to 253 (TDDELATIAG…IADMALSRLE (71 aa)) form a small ATPAse domain (RuvB-S) region. Residues 256-341 (NCGLDHMDRL…RGKTSGELFS (86 aa)) are head domain (RuvB-H). The DNA site is built by Arg-311 and Arg-316.

The protein belongs to the RuvB family. In terms of assembly, homohexamer. Forms an RuvA(8)-RuvB(12)-Holliday junction (HJ) complex. HJ DNA is sandwiched between 2 RuvA tetramers; dsDNA enters through RuvA and exits via RuvB. An RuvB hexamer assembles on each DNA strand where it exits the tetramer. Each RuvB hexamer is contacted by two RuvA subunits (via domain III) on 2 adjacent RuvB subunits; this complex drives branch migration. In the full resolvosome a probable DNA-RuvA(4)-RuvB(12)-RuvC(2) complex forms which resolves the HJ.

The protein resides in the cytoplasm. The catalysed reaction is ATP + H2O = ADP + phosphate + H(+). Its function is as follows. The RuvA-RuvB-RuvC complex processes Holliday junction (HJ) DNA during genetic recombination and DNA repair, while the RuvA-RuvB complex plays an important role in the rescue of blocked DNA replication forks via replication fork reversal (RFR). RuvA specifically binds to HJ cruciform DNA, conferring on it an open structure. The RuvB hexamer acts as an ATP-dependent pump, pulling dsDNA into and through the RuvAB complex. RuvB forms 2 homohexamers on either side of HJ DNA bound by 1 or 2 RuvA tetramers; 4 subunits per hexamer contact DNA at a time. Coordinated motions by a converter formed by DNA-disengaged RuvB subunits stimulates ATP hydrolysis and nucleotide exchange. Immobilization of the converter enables RuvB to convert the ATP-contained energy into a lever motion, pulling 2 nucleotides of DNA out of the RuvA tetramer per ATP hydrolyzed, thus driving DNA branch migration. The RuvB motors rotate together with the DNA substrate, which together with the progressing nucleotide cycle form the mechanistic basis for DNA recombination by continuous HJ branch migration. Branch migration allows RuvC to scan DNA until it finds its consensus sequence, where it cleaves and resolves cruciform DNA. The sequence is that of Holliday junction branch migration complex subunit RuvB from Syntrophotalea carbinolica (strain DSM 2380 / NBRC 103641 / GraBd1) (Pelobacter carbinolicus).